The primary structure comprises 136 residues: uncharacterized protein (136 aa).

A helical membrane pass occupies residues 19 to 39 (LGFPLGTALLLIIIFSLSGIF). 2 disordered regions span residues 54–87 (SLAN…LSVP) and 112–136 (KLTV…VPLY).

The protein resides in the membrane. This is an uncharacterized protein from Arabidopsis thaliana (Mouse-ear cress).